We begin with the raw amino-acid sequence, 535 residues long: Dual specificity mitogen-activated protein kinase kinase 7 (535 aa).

Ala2 is subject to N-acetylalanine. The stretch at 2-30 (AASSLEQKLSRLEAKLKQENREARRRIDL) forms a coiled coil. A d domain region spans residues 37–73 (QRPRPIIVITLSPAPAPSQRAALQLPLANDGGSRSPS). Residues 63–93 (LANDGGSRSPSSESSPQHPTPPTRPRHMLGL) form a disordered region. Over residues 69–79 (SRSPSSESSPQ) the composition is skewed to low complexity. A Protein kinase domain is found at 136 to 396 (LENLGEMGSG…YNKLLEHSFI (261 aa)). Residues 142–150 (MGSGTCGQV) and Lys165 contribute to the ATP site. Asp259 functions as the Proton acceptor in the catalytic mechanism. Phosphoserine; by MAP3K is present on Ser287. Phosphothreonine; by MAP3K is present on Thr291. The DVD domain stretch occupies residues 393–416 (HSFIKHYEILEVDVASWFKDVMAK). Position 427 is a phosphoserine (Ser427).

Belongs to the protein kinase superfamily. STE Ser/Thr protein kinase family. MAP kinase kinase subfamily. In terms of assembly, interacts with RASSF7, the interaction promotes phosphorylation. Interacts with VRK2. Interacts (via its D domain) with its substrates MAPK8/JNK1, MAPK9/JNK2 and MAPK10/JNK3. Interacts (via its DVD domain) with MAP3Ks activators like MAP3K5/ASK1 and MAP3K1/MEKK1. Interacts with SH3RF1, MAPK8IP1/JIP1, MAPK8IP2/JIP2 and MAPK8IP3/JIP3 scaffold proteins. Found in a complex with SH3RF1, RAC1, MAP3K11/MLK3, MAPK8IP1/JIP1 and MAPK8/JNK1. Found in a complex with SH3RF1, RAC2, MAP3K7/TAK1, MAPK8IP1/JIP1, MAPK8/JNK1 and MAPK9/JNK2. Requires Mg(2+) as cofactor. Post-translationally, activated by phosphorylation on Ser-287 and Thr-291 by MAP kinase kinase kinases (MAP3Ks). As to expression, expressed at high levels in brain, lung, liver, skeletal muscle, kidney, and testis and at lower levels in the heart and spleen.

It is found in the nucleus. It localises to the cytoplasm. The enzyme catalyses L-seryl-[protein] + ATP = O-phospho-L-seryl-[protein] + ADP + H(+). The catalysed reaction is L-threonyl-[protein] + ATP = O-phospho-L-threonyl-[protein] + ADP + H(+). It catalyses the reaction L-tyrosyl-[protein] + ATP = O-phospho-L-tyrosyl-[protein] + ADP + H(+). Activated by phosphorylation by specific MAP kinase kinase kinases such as MAP3K1/MEKK1, MAP3K3/MEKK3, MAP3K11/MLK3 and MAP3K12/DLK. Isoforms 3 and 4 have lower basal activity but a higher level of inducible activation, than isoforms 2, 6, 7 and 8. In terms of biological role, dual specificity protein kinase which acts as an essential component of the MAP kinase signal transduction pathway. Essential component of the stress-activated protein kinase/c-Jun N-terminal kinase (SAP/JNK) signaling pathway. With MAP2K4/MKK4, is the one of the only known kinase to directly activate the stress-activated protein kinase/c-Jun N-terminal kinases MAPK8/JNK1, MAPK9/JNK2 and MAPK10/JNK3. MAP2K4/MKK4 and MAP2K7/MKK7 both activate the JNKs by phosphorylation, but they differ in their preference for the phosphorylation site in the Thr-Pro-Tyr motif. MAP2K4/MKK4 shows preference for phosphorylation of the Tyr residue and MAP2K7/MKK7 for the Thr residue. The monophosphorylation of JNKs on the Thr residue is sufficient to increase JNK activity indicating that MAP2K7/MKK7 is important to trigger JNK activity, while the additional phosphorylation of the Tyr residue by MAP2K4/MKK4 ensures optimal JNK activation. Has a specific role in JNK signal transduction pathway activated by pro-inflammatory cytokines. The MKK/JNK signaling pathway is also involved in mitochondrial death signaling pathway, including the release cytochrome c, leading to apoptosis. Part of a non-canonical MAPK signaling pathway, composed of the upstream MAP3K12 kinase and downstream MAP kinases MAPK1/ERK2 and MAPK3/ERK1, that enhances the AP-1-mediated transcription of APP in response to APOE. This chain is Dual specificity mitogen-activated protein kinase kinase 7, found in Mus musculus (Mouse).